Here is an 840-residue protein sequence, read N- to C-terminus: OTU domain-containing protein 7B (840 aa).

The segment at 49–88 is disordered; the sequence is AGNLSPPFSGGSTCPKTPEKGGSDREPTRPSRPILQRQDD. The segment covering 65–77 has biased composition (basic and acidic residues); the sequence is TPEKGGSDREPTR. At Ser-100 the chain carries Phosphoserine. The TRAF-binding stretch occupies residues 152 to 401; sequence ERDLIEQSML…AVDPGKGWEW (250 aa). The catalytic stretch occupies residues 167-440; it reads AGRLNWWVSM…VKWIPLSSDS (274 aa). The OTU domain occupies 183 to 365; the sequence is LLPLATTGDG…QAHFSALVSM (183 aa). The tract at residues 187–193 is regulatory loop; it reads ATTGDGN. The active site involves Asp-191. The active-site Nucleophile is Cys-194. Catalysis depends on His-358, which acts as the Proton acceptor. Polar residues predominate over residues 440-452; it reads SQAPLAQPESPTA. Disordered stretches follow at residues 440-592 and 653-710; these read SQAP…YSQE and IMNG…VHCQ. Composition is skewed to basic and acidic residues over residues 456 to 471 and 488 to 500; these read DEPR…DKES and SKRD…KRAD. A phosphoserine mark is found at Ser-464, Ser-467, and Ser-471. Residues 483–498 carry the Nuclear localization signal motif; that stretch reads RRKEKSKRDREKDKKR. Positions 531–541 are enriched in gly residues; that stretch reads KPGGLGSGSGI. Thr-730 carries the phosphothreonine modification. Residues 793–828 form an A20-type zinc finger; that stretch reads PPTQTKCKQPNCSFYGHPETNNLCSCCYREELRRRE. 4 residues coordinate Zn(2+): Cys-799, Cys-804, Cys-816, and Cys-819.

This sequence belongs to the peptidase C64 family. In terms of assembly, interacts with TRAF6. Interacts with PARK7, leading to inhibit deubiquitinase activity. Interacts with EGFR, ITCH and NEDD4. Interacts with TRAF3. Interacts with ZAP70 in activated T cells, but not in resting T cells. Phosphorylated by EGFR.

The protein localises to the cytoplasm. Its subcellular location is the nucleus. The catalysed reaction is Thiol-dependent hydrolysis of ester, thioester, amide, peptide and isopeptide bonds formed by the C-terminal Gly of ubiquitin (a 76-residue protein attached to proteins as an intracellular targeting signal).. Deubiquitinase activity is inhibited following interaction with PARK7. Its function is as follows. Negative regulator of the non-canonical NF-kappa-B pathway that acts by mediating deubiquitination of TRAF3, an inhibitor of the NF-kappa-B pathway, thereby acting as a negative regulator of B-cell responses. In response to non-canonical NF-kappa-B stimuli, deubiquitinates 'Lys-48'-linked polyubiquitin chains of TRAF3, preventing TRAF3 proteolysis and over-activation of non-canonical NF-kappa-B. Negatively regulates mucosal immunity against infections. Deubiquitinates ZAP70, and thereby regulates T cell receptor (TCR) signaling that leads to the activation of NF-kappa-B. Plays a role in T cell homeostasis and is required for normal T cell responses, including production of IFNG and IL2. Mediates deubiquitination of EGFR. Has deubiquitinating activity toward 'Lys-11', 'Lys-48' and 'Lys-63'-linked polyubiquitin chains. Has a much higher catalytic rate with 'Lys-11'-linked polyubiquitin chains (in vitro); however the physiological significance of these data are unsure. Hydrolyzes both linear and branched forms of polyubiquitin. Acts as a regulator of mTORC1 and mTORC2 assembly by mediating 'Lys-63'-linked deubiquitination of MLST8, thereby promoting assembly of the mTORC2 complex, while inibiting formation of the mTORC1 complex. In Mus musculus (Mouse), this protein is OTU domain-containing protein 7B (Otud7b).